Consider the following 396-residue polypeptide: THAP domain-containing protein 5 (396 aa).

The segment at 2–85 adopts a THAP-type zinc-finger fold; the sequence is MPRYCAAICC…LKQTAVPTIF (84 aa). The segment at 86-113 is disordered; the sequence is SLPEDNQGKDPSKKKSQKKNLEDEKEVC. Residues 91 to 113 are compositionally biased toward basic and acidic residues; it reads NQGKDPSKKKSQKKNLEDEKEVC. Residues 322-325 carry the HCFC1-binding motif (HBM) motif; it reads EHSY. The stretch at 349–382 forms a coiled coil; sequence LELKEQQTLGRLKSLEALVRQLKQENWLSEENVK.

In terms of assembly, interacts with HTRA2; under apoptotic conditions. Interacts with ABRAXAS2. Post-translationally, cleaved by HTRA2 during apoptosis.

It localises to the nucleus. Has sequence-specific DNA-binding activity and can function as transcriptional repressor (in vitro). May be a regulator of cell cycle: THAP5 overexpression in human cell lines causes cell cycle arrest at G2/M phase. The polypeptide is THAP domain-containing protein 5 (THAP5) (Macaca fascicularis (Crab-eating macaque)).